Consider the following 548-residue polypeptide: Chaperonin GroEL (548 aa).

ATP-binding positions include 30–33, lysine 51, 87–91, glycine 415, and aspartate 495; these read TLGP and DGTTT.

It belongs to the chaperonin (HSP60) family. Forms a cylinder of 14 subunits composed of two heptameric rings stacked back-to-back. Interacts with the co-chaperonin GroES.

It is found in the cytoplasm. It catalyses the reaction ATP + H2O + a folded polypeptide = ADP + phosphate + an unfolded polypeptide.. Its function is as follows. Together with its co-chaperonin GroES, plays an essential role in assisting protein folding. The GroEL-GroES system forms a nano-cage that allows encapsulation of the non-native substrate proteins and provides a physical environment optimized to promote and accelerate protein folding. The chain is Chaperonin GroEL from Erwinia tasmaniensis (strain DSM 17950 / CFBP 7177 / CIP 109463 / NCPPB 4357 / Et1/99).